A 382-amino-acid polypeptide reads, in one-letter code: 3-dehydroquinate synthase (382 aa).

NAD(+) is bound by residues 115 to 119 (GVVGD), 139 to 140 (TS), K152, and K161. Zn(2+) is bound by residues E194, H256, and H274.

The protein belongs to the sugar phosphate cyclases superfamily. Dehydroquinate synthase family. It depends on Co(2+) as a cofactor. The cofactor is Zn(2+). Requires NAD(+) as cofactor.

The protein resides in the cytoplasm. The enzyme catalyses 7-phospho-2-dehydro-3-deoxy-D-arabino-heptonate = 3-dehydroquinate + phosphate. Its pathway is metabolic intermediate biosynthesis; chorismate biosynthesis; chorismate from D-erythrose 4-phosphate and phosphoenolpyruvate: step 2/7. Functionally, catalyzes the conversion of 3-deoxy-D-arabino-heptulosonate 7-phosphate (DAHP) to dehydroquinate (DHQ). This is 3-dehydroquinate synthase from Rhodopseudomonas palustris (strain BisB18).